Consider the following 61-residue polypeptide: MLNIFSLICICLNSVLYSSSFFVAKLPEAYAFLNPIVDVMPVIPVLFFLLAFVWQAAVSFR.

Positions methionine 1 to alanine 24 are excised as a propeptide. A helical membrane pass occupies residues methionine 40 to phenylalanine 60.

It belongs to the PsbK family. In terms of assembly, PSII is composed of 1 copy each of membrane proteins PsbA, PsbB, PsbC, PsbD, PsbE, PsbF, PsbH, PsbI, PsbJ, PsbK, PsbL, PsbM, PsbT, PsbX, PsbY, PsbZ, Psb30/Ycf12, at least 3 peripheral proteins of the oxygen-evolving complex and a large number of cofactors. It forms dimeric complexes.

The protein resides in the plastid. The protein localises to the chloroplast thylakoid membrane. Functionally, one of the components of the core complex of photosystem II (PSII). PSII is a light-driven water:plastoquinone oxidoreductase that uses light energy to abstract electrons from H(2)O, generating O(2) and a proton gradient subsequently used for ATP formation. It consists of a core antenna complex that captures photons, and an electron transfer chain that converts photonic excitation into a charge separation. This chain is Photosystem II reaction center protein K, found in Morus indica (Mulberry).